The sequence spans 207 residues: Testis-expressed protein 35 (207 aa).

Positions 43–79 (RKGMTRELKNELREVREQLTEKMEEIKQIKDIMDKDF) form a coiled coil.

Testis-specific. Expressed during spermatogenesis.

The protein localises to the nucleus. The sequence is that of Testis-expressed protein 35 (Tex35) from Mus musculus (Mouse).